The sequence spans 299 residues: tRNA dimethylallyltransferase (299 aa).

Glycine 13–threonine 20 is a binding site for ATP. Threonine 15–threonine 20 contributes to the substrate binding site. Residues aspartate 38 to glutamine 41 form an interaction with substrate tRNA region.

The protein belongs to the IPP transferase family. Monomer. The cofactor is Mg(2+).

It carries out the reaction adenosine(37) in tRNA + dimethylallyl diphosphate = N(6)-dimethylallyladenosine(37) in tRNA + diphosphate. Catalyzes the transfer of a dimethylallyl group onto the adenine at position 37 in tRNAs that read codons beginning with uridine, leading to the formation of N6-(dimethylallyl)adenosine (i(6)A). This Prochlorococcus marinus (strain AS9601) protein is tRNA dimethylallyltransferase.